The sequence spans 394 residues: MSFDEIKTHNKKAIIGIFMIFSLRVFGMFMIVPVLSTYGMCLKNSNIFLVGVAIGIYGIFQIIFQIPYGWLSDKYGQKLIINIGLLCFLLGNIIAWSSNSIWGIILGRGLQGSGAISSVCMTLLSELVLPHNRIKIMGLLGVSFGISFFLAVILSPIIVNMFGFYCLFLINSLLSIFCLFFGMFYIPASLLNKNVVCNFRSEISNFFKILSNRVLCQINLSVFLIHFFLMCNFIIIPVELKKIFEFFEYVPEIIYIVILLVSFLIVLFCICFIQSKVLYSNITITTSAFLFVLCYGIFLLFGHNNISLILGLQIFFIAFIFLETILPALVNKFSSKNYKSTTMAIYSTSQFLGSSMGGIIGGILFSYLNYFEVLFFEFVVSILWFITSILYLIK.

The next 12 membrane-spanning stretches (helical) occupy residues 13–35, 50–72, 79–97, 107–129, 136–158, 168–190, 218–240, 250–272, 277–299, 309–331, 344–366, and 371–393; these read AIIG…VPVL, VGVA…GWLS, LIIN…IAWS, GRGL…ELVL, IMGL…SPII, FLIN…PASL, INLS…PVEL, VPEI…CICF, VLYS…GIFL, ILGL…ALVN, AIYS…ILFS, and FEVL…LYLI.

It belongs to the major facilitator superfamily.

The protein localises to the cell membrane. This is an uncharacterized protein from Buchnera aphidicola subsp. Baizongia pistaciae (strain Bp).